Consider the following 637-residue polypeptide: Glutamate--cysteine ligase catalytic subunit (637 aa).

Position 1 is an N-acetylmethionine (methionine 1). Phosphoserine occurs at positions 5 and 8.

It belongs to the glutamate--cysteine ligase type 3 family. In terms of assembly, heterodimer of a catalytic heavy chain and a regulatory light chain.

It catalyses the reaction L-cysteine + L-glutamate + ATP = gamma-L-glutamyl-L-cysteine + ADP + phosphate + H(+). The catalysed reaction is (2S)-2-aminobutanoate + L-glutamate + ATP = gamma-L-glutamyl-(2S)-2-aminobutanoate + ADP + phosphate + H(+). Its pathway is sulfur metabolism; glutathione biosynthesis; glutathione from L-cysteine and L-glutamate: step 1/2. Feedback inhibition by glutathione. Catalyzes the ATP-dependent ligation of L-glutamate and L-cysteine and participates in the first and rate-limiting step in glutathione biosynthesis. The chain is Glutamate--cysteine ligase catalytic subunit from Homo sapiens (Human).